We begin with the raw amino-acid sequence, 93 residues long: Putative pterin-4-alpha-carbinolamine dehydratase (93 aa).

This sequence belongs to the pterin-4-alpha-carbinolamine dehydratase family.

It carries out the reaction (4aS,6R)-4a-hydroxy-L-erythro-5,6,7,8-tetrahydrobiopterin = (6R)-L-erythro-6,7-dihydrobiopterin + H2O. The polypeptide is Putative pterin-4-alpha-carbinolamine dehydratase (Roseiflexus castenholzii (strain DSM 13941 / HLO8)).